A 654-amino-acid polypeptide reads, in one-letter code: Sphingosine kinase 2 (654 aa).

Residues 1–17 (MNGHLEAEEQQDQRPDQ) show a composition bias toward basic and acidic residues. The disordered stretch occupies residues 1–28 (MNGHLEAEEQQDQRPDQELTGSWGHGPR). The required for binding to sulfatide and phosphoinositides and for membrane localizatione stretch occupies residues 1-175 (MNGHLEAEEQ…LPGDGEITPD (175 aa)). A Nuclear localization signal motif is present at residues 122–130 (RGRRGARRR). One can recognise a DAGKc domain in the interval 178–325 (PRPPRLLLLV…LDLLSVTLAS (148 aa)). ATP-binding positions include 188–190 (NPF) and 220–224 (TERQN). 245 to 248 (SGDG) provides a ligand contact to substrate. The Proton donor/acceptor role is filled by Asp247. ATP contacts are provided by residues Glu252 and 277 to 279 (GSG). Residue Asp344 participates in substrate binding. Arg351 and Arg357 together coordinate ATP. Ser387 carries the phosphoserine; by MAPK modification. 2 positions are modified to phosphoserine: Ser393 and Ser399. The interval 400-509 (ELTLTPDPAP…PLPTPDARVG (110 aa)) is disordered. The Nuclear export signal signature appears at 416–425 (LHRSVSDLPL). 2 positions are modified to phosphoserine; by PKD: Ser419 and Ser421. Gly residues predominate over residues 447 to 461 (NGGGPELAGDWGGAG). Residues 462-482 (DAPLSPDPLLSSPPGSPKAAL) show a composition bias toward low complexity. At Ser477 the chain carries Phosphoserine. The residue at position 614 (Thr614) is a Phosphothreonine; by MAPK. 622-624 (DGE) provides a ligand contact to ATP.

In terms of assembly, interacts with histone H3. Interacts with HDAC1, HDAC2, MBD2 and SIN3A. Interacts with EEF1A1; the interaction enhances SPHK2 kinase activity. Interacts with PHB2. Requires Mg(2+) as cofactor. Phosphorylated by PKD on Ser-419 and Ser-421 upon PMA treatment. Phosphorylation induces export from the nucleus to the cytoplasm. Phosphorylated by MAPK1 and MAPK2 at Ser-387 and Thr-614, phosphorylation is induced by agonists such as EGF and PMA and increases kinase activity. Post-translationally, cleaved by CASP1 in apoptotic cells. The truncated form is released from cells. As to expression, mainly expressed in adult kidney, liver, and brain. Expressed in cerebral cortex and hippocampus (at protein level). Isoform 1 is the predominant form expressed in most tissues.

Its subcellular location is the cytoplasm. It is found in the nucleus. It localises to the endoplasmic reticulum. The protein resides in the mitochondrion inner membrane. The protein localises to the lysosome membrane. The enzyme catalyses a sphingoid base + ATP = a sphingoid 1-phosphate + ADP + H(+). The catalysed reaction is sphing-4-enine + ATP = sphing-4-enine 1-phosphate + ADP + H(+). It carries out the reaction sphinganine + ATP = sphinganine 1-phosphate + ADP + H(+). It catalyses the reaction (4R)-hydroxysphinganine + ATP = (4R)-hydroxysphinganine 1-phosphate + ADP + H(+). Its activity is regulated as follows. Inhibited by sulfatide. Kinase activity is increased by phosphorylation by MAPK2 upon PMA or EGF treatments. Its function is as follows. Catalyzes the phosphorylation of sphingosine to form sphingosine-1-phosphate (SPP), a lipid mediator with both intra- and extracellular functions. Also acts on D-erythro-dihydrosphingosine, D-erythro-sphingosine and L-threo-dihydrosphingosine. Binds phosphoinositides. In contrast to prosurvival SPHK1, has a positive effect on intracellular ceramide levels, inhibits cells growth and enhances apoptosis. In mitochondria, is important for cytochrome-c oxidase assembly and mitochondrial respiration. The SPP produced in mitochondria binds PHB2 and modulates the regulation via PHB2 of complex IV assembly and respiration. In nucleus, plays a role in epigenetic regulation of gene expression. Interacts with HDAC1 and HDAC2 and, through SPP production, inhibits their enzymatic activity, preventing the removal of acetyl groups from lysine residues with histones. Up-regulates acetylation of histone H3-K9, histone H4-K5 and histone H2B-K12. In nucleus, may have an inhibitory effect on DNA synthesis and cell cycle. In mast cells, is the main regulator of SPP production which mediates calcium influx, NF-kappa-B activation, cytokine production, such as TNF and IL6, and degranulation of mast cells. In dopaminergic neurons, is involved in promoting mitochondrial functions regulating ATP and ROS levels. Also involved in the regulation of glucose and lipid metabolism. This Homo sapiens (Human) protein is Sphingosine kinase 2.